Consider the following 262-residue polypeptide: Ribosomal RNA small subunit methyltransferase A (262 aa).

6 residues coordinate S-adenosyl-L-methionine: Asn-14, Leu-16, Gly-41, Glu-63, Asp-85, and Asn-105.

The protein belongs to the class I-like SAM-binding methyltransferase superfamily. rRNA adenine N(6)-methyltransferase family. RsmA subfamily.

It localises to the cytoplasm. The catalysed reaction is adenosine(1518)/adenosine(1519) in 16S rRNA + 4 S-adenosyl-L-methionine = N(6)-dimethyladenosine(1518)/N(6)-dimethyladenosine(1519) in 16S rRNA + 4 S-adenosyl-L-homocysteine + 4 H(+). Functionally, specifically dimethylates two adjacent adenosines (A1518 and A1519) in the loop of a conserved hairpin near the 3'-end of 16S rRNA in the 30S particle. May play a critical role in biogenesis of 30S subunits. This is Ribosomal RNA small subunit methyltransferase A from Maridesulfovibrio salexigens (strain ATCC 14822 / DSM 2638 / NCIMB 8403 / VKM B-1763) (Desulfovibrio salexigens).